Consider the following 310-residue polypeptide: tRNA uridine(34) hydroxylase (310 aa).

The Rhodanese domain occupies 124–218 (SDPEVLLIDT…YFEEVPQEES (95 aa)). Cys-178 acts as the Cysteine persulfide intermediate in catalysis.

The protein belongs to the TrhO family.

The catalysed reaction is uridine(34) in tRNA + AH2 + O2 = 5-hydroxyuridine(34) in tRNA + A + H2O. Catalyzes oxygen-dependent 5-hydroxyuridine (ho5U) modification at position 34 in tRNAs. In Pseudomonas putida (strain ATCC 47054 / DSM 6125 / CFBP 8728 / NCIMB 11950 / KT2440), this protein is tRNA uridine(34) hydroxylase.